Here is a 115-residue protein sequence, read N- to C-terminus: MARAAATQLVLVAMVAAMLLVATDAAISCGQVSSALSPCISYARGNGAKPPVACCSGVKRLAGAAQSTADKQAACKCIKSAAGGLNAGKAAGIPSMCGVSVPYAISASVDCSKIR.

The first 25 residues, 1-25 (MARAAATQLVLVAMVAAMLLVATDA), serve as a signal peptide directing secretion. Intrachain disulfides connect cysteine 29–cysteine 77, cysteine 39–cysteine 54, cysteine 55–cysteine 97, and cysteine 75–cysteine 111.

This sequence belongs to the plant LTP family.

Functionally, plant non-specific lipid-transfer proteins transfer phospholipids as well as galactolipids across membranes. May play a role in wax or cutin deposition in the cell walls of expanding epidermal cells and certain secretory tissues. The polypeptide is Non-specific lipid-transfer protein 4.3 (LTP4.3) (Hordeum vulgare (Barley)).